Consider the following 64-residue polypeptide: Large ribosomal subunit protein bL35 (64 aa).

Positions Met-1–Phe-27 are disordered.

Belongs to the bacterial ribosomal protein bL35 family.

In Azotobacter vinelandii (strain DJ / ATCC BAA-1303), this protein is Large ribosomal subunit protein bL35.